The chain runs to 164 residues: 17.8 kDa class II heat shock protein (164 aa).

The region spanning 48 to 164 (DARAMAATPA…KPKTIEVKVA (117 aa)) is the sHSP domain.

The protein belongs to the small heat shock protein (HSP20) family.

The protein localises to the cytoplasm. The polypeptide is 17.8 kDa class II heat shock protein (Zea mays (Maize)).